The following is a 580-amino-acid chain: Putative adenine deaminase YerA (580 aa).

Residue Ser399 is modified to Phosphoserine.

The protein belongs to the metallo-dependent hydrolases superfamily. Adenine deaminase family.

It catalyses the reaction adenine + H2O + H(+) = hypoxanthine + NH4(+). In Bacillus subtilis (strain 168), this protein is Putative adenine deaminase YerA (yerA).